Reading from the N-terminus, the 122-residue chain is Small ribosomal subunit protein uS12 (122 aa).

The residue at position 89 (aspartate 89) is a 3-methylthioaspartic acid.

Belongs to the universal ribosomal protein uS12 family. As to quaternary structure, part of the 30S ribosomal subunit. Contacts proteins S8 and S17. May interact with IF1 in the 30S initiation complex.

With S4 and S5 plays an important role in translational accuracy. Functionally, interacts with and stabilizes bases of the 16S rRNA that are involved in tRNA selection in the A site and with the mRNA backbone. Located at the interface of the 30S and 50S subunits, it traverses the body of the 30S subunit contacting proteins on the other side and probably holding the rRNA structure together. The combined cluster of proteins S8, S12 and S17 appears to hold together the shoulder and platform of the 30S subunit. This Corynebacterium glutamicum (strain R) protein is Small ribosomal subunit protein uS12.